A 685-amino-acid chain; its full sequence is MQDIQLDKLLSADMSPENAQQVMQALSQSLNEHNIRYYVDDAPTITDSEYDRLMQCLIKLEAQFPQFIVADSPTQRVGGLALAKFDQITHLKPMLSLDNAFGEADFSAFHKRVTDKVGEVSFCCEPKLDGLAVSILYRHGVLERAATRGDGTVGEDITENVKTIKSIPLKLRGNDFPEVVEVRGEAFMPKAAFEALNERARAKDEKLFVNPRNAAAGSLRQLDSKITASRSLAFYAYALGVVEPDSYSLGKTHYEQLQQLKSWGLPVSNEIKVCDELDQVFDYYKDILTRRSDLPFEIDGVVMKVNDIAQQQRLGFVAKSPRWAIAYKFPAQEEMTLLEGVDFQVGRTGAVTPVARLKPVFVGGVTVSNATLHNADEIERLGIKIGDTVIIRRAGDVIPQIVAIVPERRPETATNIVFPHNCPVCGSLVERLEGEAVARCSGGLFCEAQRKEAIKHFASRKALDIDGMGDKVVEQLIDKELVQSPADLFKLTASMMTMLDRMGMKSATNLAAAIEAAKTTTLARFLYALGIREVGEATAANLAAHFASLDALRVATVEQLTAVEDVGVVVAQHVAHFFAQPHNLEVIDALIAAGVHWPAIEAPSADAQPLKGQTWVLTGTLNQLNRNDAKAQLQTLGAKVAGSVSKNTDCLVAGEAAGSKLAKAQELGVKVIDEEALLALFAANR.

Residues 47-51, 96-97, and Glu-125 each bind NAD(+); these read DSEYD and SL. The active-site N6-AMP-lysine intermediate is the Lys-127. NAD(+)-binding residues include Arg-148, Glu-185, Lys-304, and Lys-328. Zn(2+) contacts are provided by Cys-422, Cys-425, Cys-440, and Cys-446. A BRCT domain is found at 605–685; the sequence is ADAQPLKGQT…ALLALFAANR (81 aa).

This sequence belongs to the NAD-dependent DNA ligase family. LigA subfamily. Mg(2+) serves as cofactor. It depends on Mn(2+) as a cofactor.

It carries out the reaction NAD(+) + (deoxyribonucleotide)n-3'-hydroxyl + 5'-phospho-(deoxyribonucleotide)m = (deoxyribonucleotide)n+m + AMP + beta-nicotinamide D-nucleotide.. Its function is as follows. DNA ligase that catalyzes the formation of phosphodiester linkages between 5'-phosphoryl and 3'-hydroxyl groups in double-stranded DNA using NAD as a coenzyme and as the energy source for the reaction. It is essential for DNA replication and repair of damaged DNA. This Shewanella putrefaciens (strain CN-32 / ATCC BAA-453) protein is DNA ligase.